We begin with the raw amino-acid sequence, 732 residues long: X-ray repair cross-complementing protein 5 (732 aa).

The VWFA domain occupies 9 to 161 (AVVLCVDVGV…CNLKKSGISL (153 aa)). The interval 138–165 (LSSPFSQDQLDVIICNLKKSGISLQFFL) is leucine-zipper. Residue lysine 195 forms a Glycyl lysine isopeptide (Lys-Gly) (interchain with G-Cter in SUMO2) linkage. Residues 253-453 (IGPNLSIKIV…CTPTEAQLSA (201 aa)) form the Ku domain. A Phosphoserine modification is found at serine 258. Position 265 is an N6-acetyllysine (lysine 265). The residue at position 318 (serine 318) is a Phosphoserine. Position 332 is an N6-acetyllysine (lysine 332). Residues lysine 532 and lysine 534 each participate in a glycyl lysine isopeptide (Lys-Gly) (interchain with G-Cter in SUMO2) cross-link. Residue threonine 535 is modified to Phosphothreonine. Glycyl lysine isopeptide (Lys-Gly) (interchain with G-Cter in SUMO2) cross-links involve residues lysine 567 and lysine 569. Phosphoserine; by PRKDC occurs at positions 578, 580, and 581. An N6-acetyllysine modification is found at lysine 666. Glycyl lysine isopeptide (Lys-Gly) (interchain with G-Cter in SUMO2) cross-links involve residues lysine 670 and lysine 689. Positions 708–732 (PKDKAKEDTTGPEEAGDVDDLLDMI) are disordered. Threonine 716 is modified (phosphothreonine; by PRKDC). Acidic residues predominate over residues 717–732 (TGPEEAGDVDDLLDMI). The EEXXXDL motif motif lies at 720–728 (EEAGDVDDL).

Belongs to the ku80 family. Heterodimer composed of XRCC5/Ku80 and XRCC6/Ku70. Component of the core long-range non-homologous end joining (NHEJ) complex (also named DNA-PK complex) composed of PRKDC, LIG4, XRCC4, XRCC6/Ku70, XRCC5/Ku86 and NHEJ1/XLF. Additional component of the NHEJ complex includes PAXX. Following autophosphorylation, PRKDC dissociates from DNA, leading to formation of the short-range NHEJ complex, composed of LIG4, XRCC4, XRCC6/Ku70, XRCC5/Ku86 and NHEJ1/XLF. The XRCC5-XRCC6 dimer also associates with NAA15, and this complex displays DNA binding activity towards the osteocalcin FGF response element (OCFRE). In addition, XRCC5 binds to the osteoblast-specific transcription factors MSX2 and RUNX2. Interacts with ELF3. Interacts with APLF (via KBM motif). The XRCC5/XRCC6 dimer associates in a DNA-dependent manner with APEX1. Identified in a complex with DEAF1 and XRCC6. Interacts with NR4A3; the DNA-dependent protein kinase complex DNA-PK phosphorylates and activates NR4A3 and prevents NR4A3 ubiquitinylation and degradation. Interacts with RNF138. Interacts with CYREN (via KBM motif). Interacts with WRN (via KBM motif). Interacts (via N-terminus) with HSF1 (via N-terminus); this interaction is direct and prevents XRCC5/XRCC6 heterodimeric binding and non-homologous end joining (NHEJ) repair activities induced by ionizing radiation (IR). Interacts with DHX9; this interaction occurs in a RNA-dependent manner. Part of the HDP-RNP complex composed of at least HEXIM1, PRKDC, XRCC5, XRCC6, paraspeckle proteins (SFPQ, NONO, PSPC1, RBM14, and MATR3) and NEAT1 RNA. Interacts with ERCC6. Interacts with ATF7. The XRCC5-XRCC6 dimer associates with ALKBH2. Interacts with TPRN; TPRN interacts with a number of DNA damage response proteins, is recruited to sites of DNA damage and may play a role in DNA damage repair. Interacts with ERCC6L2. Post-translationally, ADP-ribosylated by PARP3. Phosphorylated on serine residues. Phosphorylation by PRKDC may enhance helicase activity. In terms of processing, sumoylated. Post-translationally, ubiquitinated by RNF8 via 'Lys-48'-linked ubiquitination following DNA damage, leading to its degradation and removal from DNA damage sites. Ubiquitinated by RNF138, leading to remove the Ku complex from DNA breaks.

The protein localises to the nucleus. It is found in the nucleolus. Its subcellular location is the chromosome. In terms of biological role, single-stranded DNA-dependent ATP-dependent helicase that plays a key role in DNA non-homologous end joining (NHEJ) by recruiting DNA-PK to DNA. Required for double-strand break repair and V(D)J recombination. Also has a role in chromosome translocation. The DNA helicase II complex binds preferentially to fork-like ends of double-stranded DNA in a cell cycle-dependent manner. It works in the 3'-5' direction. During NHEJ, the XRCC5-XRRC6 dimer performs the recognition step: it recognizes and binds to the broken ends of the DNA and protects them from further resection. Binding to DNA may be mediated by XRCC6. The XRCC5-XRRC6 dimer acts as a regulatory subunit of the DNA-dependent protein kinase complex DNA-PK by increasing the affinity of the catalytic subunit PRKDC to DNA by 100-fold. The XRCC5-XRRC6 dimer is probably involved in stabilizing broken DNA ends and bringing them together. The assembly of the DNA-PK complex to DNA ends is required for the NHEJ ligation step. The XRCC5-XRRC6 dimer probably also acts as a 5'-deoxyribose-5-phosphate lyase (5'-dRP lyase), by catalyzing the beta-elimination of the 5' deoxyribose-5-phosphate at an abasic site near double-strand breaks. XRCC5 probably acts as the catalytic subunit of 5'-dRP activity, and allows to 'clean' the termini of abasic sites, a class of nucleotide damage commonly associated with strand breaks, before such broken ends can be joined. The XRCC5-XRRC6 dimer together with APEX1 acts as a negative regulator of transcription. In association with NAA15, the XRCC5-XRRC6 dimer binds to the osteocalcin promoter and activates osteocalcin expression. As part of the DNA-PK complex, involved in the early steps of ribosome assembly by promoting the processing of precursor rRNA into mature 18S rRNA in the small-subunit processome. Binding to U3 small nucleolar RNA, recruits PRKDC and XRCC5/Ku86 to the small-subunit processome. Plays a role in the regulation of DNA virus-mediated innate immune response by assembling into the HDP-RNP complex, a complex that serves as a platform for IRF3 phosphorylation and subsequent innate immune response activation through the cGAS-STING pathway. The protein is X-ray repair cross-complementing protein 5 (Xrcc5) of Mus musculus (Mouse).